The primary structure comprises 303 residues: tRNA pseudouridine synthase B (303 aa).

The active-site Nucleophile is D47.

It belongs to the pseudouridine synthase TruB family. Type 1 subfamily.

It carries out the reaction uridine(55) in tRNA = pseudouridine(55) in tRNA. In terms of biological role, responsible for synthesis of pseudouridine from uracil-55 in the psi GC loop of transfer RNAs. This is tRNA pseudouridine synthase B from Ruegeria pomeroyi (strain ATCC 700808 / DSM 15171 / DSS-3) (Silicibacter pomeroyi).